The following is a 127-amino-acid chain: DNA-directed RNA polymerase subunit omega (127 aa).

The protein belongs to the RNA polymerase subunit omega family. In terms of assembly, the RNAP catalytic core consists of 2 alpha, 1 beta, 1 beta' and 1 omega subunit. When a sigma factor is associated with the core the holoenzyme is formed, which can initiate transcription.

The catalysed reaction is RNA(n) + a ribonucleoside 5'-triphosphate = RNA(n+1) + diphosphate. Functionally, promotes RNA polymerase assembly. Latches the N- and C-terminal regions of the beta' subunit thereby facilitating its interaction with the beta and alpha subunits. The polypeptide is DNA-directed RNA polymerase subunit omega (Rickettsia typhi (strain ATCC VR-144 / Wilmington)).